Here is a 421-residue protein sequence, read N- to C-terminus: Cyclin-A1 (421 aa).

Residues 1–20 (MRRHSSKSGVALPPVGQGPD) are disordered.

The protein belongs to the cyclin family. Cyclin AB subfamily. As to quaternary structure, interacts with the CDK2 and the CDC2 protein kinases to form a serine/threonine kinase holoenzyme complex. The cyclin subunit imparts substrate specificity to the complex. Does not bind CDK4 and CDK5 (in vitro). The cyclin A1-CDK2 complex interacts with transcription factor E2F-1 and RB proteins. Found in a complex with CDK2, CABLES1 and CCNE1. Interacts with INCA1 and KLHDC9. Polyubiquitinated via 'Lys-11'-linked ubiquitin by the anaphase-promoting complex (APC/C), leading to its degradation by the proteasome. Deubiquitinated and stabilized by USP37 enables entry into S phase. Ubiquitinated during the G1 phase by the SCF(FBXO31) complex, leading to its proteasomal degradation.

Its subcellular location is the nucleus. Its function is as follows. May be involved in the control of the cell cycle at the G1/S (start) and G2/M (mitosis) transitions. May primarily function in the control of the germline meiotic cell cycle and additionally in the control of mitotic cell cycle in some somatic cells. The protein is Cyclin-A1 (Ccna1) of Rattus norvegicus (Rat).